A 547-amino-acid chain; its full sequence is Nitrosoguanidine resistance protein SNG1 (547 aa).

A disordered region spans residues 35–86; it reads NQRFAEGSGHSSDLAKSLEDYRPPDEKPSSLSSVGEGGANEEEKGGNDGGPL. Positions 50 to 62 are enriched in basic and acidic residues; that stretch reads KSLEDYRPPDEKP. A Phosphothreonine modification is found at Thr91. 8 helical membrane-spanning segments follow: residues 109 to 129, 159 to 179, 318 to 338, 363 to 383, 394 to 414, 418 to 438, 457 to 477, and 488 to 508; these read FVLN…IYWG, ISAI…IYNA, ILMA…VLQL, LISW…SAIF, GGFV…GGAN, LSLV…TWII, YGYI…FLNL, and ILVA…KFAG. Positions 526–536 are enriched in low complexity; that stretch reads ATQRASRPAEA. Positions 526–547 are disordered; it reads ATQRASRPAEANTDKNNNPPGN.

It to yeast YJR015W.

The protein resides in the membrane. Its function is as follows. May function as a N-methyl-N'nitro-N-nitrosoguanidine (MNNG) export permease. This Saccharomyces cerevisiae (strain ATCC 204508 / S288c) (Baker's yeast) protein is Nitrosoguanidine resistance protein SNG1 (SNG1).